We begin with the raw amino-acid sequence, 246 residues long: NH(3)-dependent NAD(+) synthetase (246 aa).

29-36 (GLSGGIDS) is a binding site for ATP. Asp-35 serves as a coordination point for Mg(2+). Arg-110 is a deamido-NAD(+) binding site. Position 130 (Thr-130) interacts with ATP. Glu-135 provides a ligand contact to Mg(2+). Positions 159 and 181 each coordinate ATP.

This sequence belongs to the NAD synthetase family. In terms of assembly, homodimer.

It catalyses the reaction deamido-NAD(+) + NH4(+) + ATP = AMP + diphosphate + NAD(+) + H(+). Its pathway is cofactor biosynthesis; NAD(+) biosynthesis; NAD(+) from deamido-NAD(+) (ammonia route): step 1/1. Its function is as follows. Catalyzes the ATP-dependent amidation of deamido-NAD to form NAD. Uses ammonia as a nitrogen source. In Campylobacter jejuni subsp. jejuni serotype O:2 (strain ATCC 700819 / NCTC 11168), this protein is NH(3)-dependent NAD(+) synthetase.